We begin with the raw amino-acid sequence, 436 residues long: Acetyl-CoA decarbonylase/synthase complex subunit delta 1 (436 aa).

Belongs to the CdhD family. As to quaternary structure, heterodimer of delta and gamma chains. The ACDS complex is made up of alpha, epsilon, beta, gamma and delta chains with a probable stoichiometry of (alpha(2)epsilon(2))(4)-beta(8)-(gamma(1)delta(1))(8) (Potential).

It participates in one-carbon metabolism; methanogenesis from acetate. In terms of biological role, part of a complex that catalyzes the reversible cleavage of acetyl-CoA, allowing growth on acetate as sole source of carbon and energy. Probably maintains the overall quaternary structure of the ACDS complex. The protein is Acetyl-CoA decarbonylase/synthase complex subunit delta 1 (cdhD1) of Methanosarcina acetivorans (strain ATCC 35395 / DSM 2834 / JCM 12185 / C2A).